An 88-amino-acid chain; its full sequence is Small ribosomal subunit protein uS15 (88 aa).

The protein belongs to the universal ribosomal protein uS15 family. Part of the 30S ribosomal subunit. Forms a bridge to the 50S subunit in the 70S ribosome, contacting the 23S rRNA.

One of the primary rRNA binding proteins, it binds directly to 16S rRNA where it helps nucleate assembly of the platform of the 30S subunit by binding and bridging several RNA helices of the 16S rRNA. Its function is as follows. Forms an intersubunit bridge (bridge B4) with the 23S rRNA of the 50S subunit in the ribosome. The polypeptide is Small ribosomal subunit protein uS15 (Francisella tularensis subsp. holarctica (strain LVS)).